Consider the following 403-residue polypeptide: S-adenosylmethionine synthase (403 aa).

His15 contacts ATP. Asp17 lines the Mg(2+) pocket. A K(+)-binding site is contributed by Glu43. Residues Glu56 and Gln99 each coordinate L-methionine. A flexible loop region spans residues 99–109 (QSPDINQGVDR). ATP contacts are provided by residues 166 to 168 (DAK), 232 to 233 (KF), Asp241, 247 to 248 (RK), Ala264, and Lys268. Asp241 provides a ligand contact to L-methionine. Lys272 contributes to the L-methionine binding site.

Belongs to the AdoMet synthase family. Homotetramer; dimer of dimers. Mg(2+) serves as cofactor. It depends on K(+) as a cofactor.

It localises to the cytoplasm. The enzyme catalyses L-methionine + ATP + H2O = S-adenosyl-L-methionine + phosphate + diphosphate. Its pathway is amino-acid biosynthesis; S-adenosyl-L-methionine biosynthesis; S-adenosyl-L-methionine from L-methionine: step 1/1. Functionally, catalyzes the formation of S-adenosylmethionine (AdoMet) from methionine and ATP. The overall synthetic reaction is composed of two sequential steps, AdoMet formation and the subsequent tripolyphosphate hydrolysis which occurs prior to release of AdoMet from the enzyme. The sequence is that of S-adenosylmethionine synthase from Xanthomonas axonopodis pv. citri (strain 306).